Consider the following 70-residue polypeptide: MSKKTTKDVRNLSDSEMSDKIQNLRKELFDLRFKQATRQLAKTHRFKEARTELAQLLTVSNERSRSNTSS.

The protein belongs to the universal ribosomal protein uL29 family.

The protein is Large ribosomal subunit protein uL29 of Prochlorococcus marinus (strain NATL1A).